The primary structure comprises 1353 residues: Protein timeless homolog (1353 aa).

Disordered stretches follow at residues 798-825, 1150-1291, and 1306-1335; these read VAED…EEEV, KPTR…LEED, and GGSI…DPFT. The segment covering 802–825 has biased composition (acidic residues); it reads RAEDPDEEDPAEPYDSEQEEEEEV. 2 stretches are compositionally biased toward basic and acidic residues: residues 1150 to 1160 and 1168 to 1182; these read KPTRQVERHLE and ERSK…KFDD. Composition is skewed to acidic residues over residues 1183–1206 and 1217–1226; these read FLND…EEEE and DSEDEEEHIE. Residues 1227–1239 are compositionally biased toward basic and acidic residues; that stretch reads QEEAQKKLEKVAE. 3 stretches are compositionally biased toward acidic residues: residues 1261–1273, 1282–1291, and 1323–1332; these read DSSD…DSAE, AEDDSDLEED, and EEREDDDDED.

The protein belongs to the timeless family. As to quaternary structure, associates with the cohesin complex. Interacts with smc-1, smc-3, scc-1 and scc-3.

The protein resides in the nucleus. In terms of biological role, plays an important role in chromosome cohesion during both mitosis and meiosis. In prophase of meiosis, it is involved in the formation of the synaptonemal complex (SC) and specifically, in the diplotene and diakinesis phases of prophase, it stabilizes the association of homologous chromosomes during synapsis and sister chromatid cohesion. It regulates cohesin subunits to promote meiotic chromosome cohesion and localizes non-SMC (structural maintenance of chromosome) cohesin subunits to chromatin prior to or during pre-meiotic S phase. Implicated in influencing either the stability or loading of meiotic-specific cohesin subunit, rec8. Controls cell cycle exit and cell fusion to prevent the premature differentiation into adult cells. Specifically, regulates hypodermal seam cell identity. This Caenorhabditis elegans protein is Protein timeless homolog.